Here is a 597-residue protein sequence, read N- to C-terminus: Elongation factor 4 (597 aa).

The tr-type G domain occupies 2 to 184 (DHIRNFSIIA…ALIAKVPPPK (183 aa)). GTP-binding positions include 14–19 (DHGKST) and 131–134 (NKID).

It belongs to the TRAFAC class translation factor GTPase superfamily. Classic translation factor GTPase family. LepA subfamily.

The protein localises to the cell inner membrane. It carries out the reaction GTP + H2O = GDP + phosphate + H(+). In terms of biological role, required for accurate and efficient protein synthesis under certain stress conditions. May act as a fidelity factor of the translation reaction, by catalyzing a one-codon backward translocation of tRNAs on improperly translocated ribosomes. Back-translocation proceeds from a post-translocation (POST) complex to a pre-translocation (PRE) complex, thus giving elongation factor G a second chance to translocate the tRNAs correctly. Binds to ribosomes in a GTP-dependent manner. This is Elongation factor 4 from Burkholderia vietnamiensis (strain G4 / LMG 22486) (Burkholderia cepacia (strain R1808)).